Reading from the N-terminus, the 200-residue chain is Putative 3-methyladenine DNA glycosylase (200 aa).

It belongs to the DNA glycosylase MPG family.

The chain is Putative 3-methyladenine DNA glycosylase from Bradyrhizobium diazoefficiens (strain JCM 10833 / BCRC 13528 / IAM 13628 / NBRC 14792 / USDA 110).